The chain runs to 695 residues: Parasporal crystal protein Cry18Ca (695 aa).

The protein belongs to the delta endotoxin family.

Functionally, binds to the brush border membrane vesicles of scarab larvae and damages the gut wall somehow to allow the vegetative cells of P.popilliae to enter the hemolymph. This is Parasporal crystal protein Cry18Ca (cry18Ca) from Paenibacillus popilliae (Bacillus popilliae).